Reading from the N-terminus, the 317-residue chain is uncharacterized protein (317 aa).

Transmembrane regions (helical) follow at residues 18–38, 58–78, 92–112, 130–150, 159–179, 202–222, and 252–272; these read FWLI…LVII, IILS…GFIF, FLGS…WWSF, LFSA…AWAV, LFHI…KLLP, CSFL…LSTV, and NLLN…LLIA.

Belongs to the CbiQ family.

The protein resides in the cell membrane. This is an uncharacterized protein from Mycoplasma genitalium (strain ATCC 33530 / DSM 19775 / NCTC 10195 / G37) (Mycoplasmoides genitalium).